The chain runs to 501 residues: MKKRALISVFDKDGVLELAKFLRDRDVEIISSGGTYKYLKENNIEVKEISEITDFPEMLDGRVKTLHPLVHAGILAIRDNKEHMKTLEEREINTIDYVVVNLYPFFEKVREDLSFEEKVEFIDIGGPTMLRAAAKNFKDVVVLSDKKDYEKVMNEIKENNCVSFKLRKTLAGKVFNLMSAYDAAISNFLLEGEEEYPEYLSVSYKKIQDLRYGENPHQGAAYYSSTEFDGAMNSFEILNGKALSYNNIKDLDIAWKVACEFEETACCALKHNTPCGVAVGENSKEVYLKAYDADPVSIFGGIVAINRKIDKATAEEMVKIFLEVVAAPDFDEDALEVLRTKKNLRVIKCKNTPQAKNYMVTVDGGILVQGEDNKLANEYKVVTEKEPTEMELRDMIFGMKVVKYVKSNAIVVVKDGVATGIGGGQVNRIWATKEALERGKGGAVLASDAFFPFRDCVDEAAKNGIKAIIQPGGSIRDEESIEACNEHGISMVFTGVRHFKH.

The 144-residue stretch at Met1–Ser144 folds into the MGS-like domain.

It belongs to the PurH family.

The enzyme catalyses (6R)-10-formyltetrahydrofolate + 5-amino-1-(5-phospho-beta-D-ribosyl)imidazole-4-carboxamide = 5-formamido-1-(5-phospho-D-ribosyl)imidazole-4-carboxamide + (6S)-5,6,7,8-tetrahydrofolate. The catalysed reaction is IMP + H2O = 5-formamido-1-(5-phospho-D-ribosyl)imidazole-4-carboxamide. It participates in purine metabolism; IMP biosynthesis via de novo pathway; 5-formamido-1-(5-phospho-D-ribosyl)imidazole-4-carboxamide from 5-amino-1-(5-phospho-D-ribosyl)imidazole-4-carboxamide (10-formyl THF route): step 1/1. It functions in the pathway purine metabolism; IMP biosynthesis via de novo pathway; IMP from 5-formamido-1-(5-phospho-D-ribosyl)imidazole-4-carboxamide: step 1/1. This Clostridium perfringens (strain 13 / Type A) protein is Bifunctional purine biosynthesis protein PurH.